The sequence spans 224 residues: Elongation factor Ts (224 aa).

The segment at 81-84 (TDFV) is involved in Mg(2+) ion dislocation from EF-Tu.

It belongs to the EF-Ts family.

The protein localises to the cytoplasm. Associates with the EF-Tu.GDP complex and induces the exchange of GDP to GTP. It remains bound to the aminoacyl-tRNA.EF-Tu.GTP complex up to the GTP hydrolysis stage on the ribosome. The polypeptide is Elongation factor Ts (Finegoldia magna (strain ATCC 29328 / DSM 20472 / WAL 2508) (Peptostreptococcus magnus)).